Here is a 136-residue protein sequence, read N- to C-terminus: Nucleoside diphosphate kinase (136 aa).

6 residues coordinate ATP: Lys-10, Phe-58, Arg-86, Thr-92, Arg-104, and Asn-114. The active-site Pros-phosphohistidine intermediate is the His-117.

It belongs to the NDK family. In terms of assembly, homotetramer. Mg(2+) serves as cofactor.

Its subcellular location is the cytoplasm. The enzyme catalyses a 2'-deoxyribonucleoside 5'-diphosphate + ATP = a 2'-deoxyribonucleoside 5'-triphosphate + ADP. It carries out the reaction a ribonucleoside 5'-diphosphate + ATP = a ribonucleoside 5'-triphosphate + ADP. In terms of biological role, major role in the synthesis of nucleoside triphosphates other than ATP. The ATP gamma phosphate is transferred to the NDP beta phosphate via a ping-pong mechanism, using a phosphorylated active-site intermediate. This Mycolicibacterium gilvum (strain PYR-GCK) (Mycobacterium gilvum (strain PYR-GCK)) protein is Nucleoside diphosphate kinase.